A 212-amino-acid chain; its full sequence is Ribonuclease HII (212 aa).

The 204-residue stretch at 1 to 204 (MRVGIDEAGR…LRSTAPLYYI (204 aa)) folds into the RNase H type-2 domain. A divalent metal cation contacts are provided by aspartate 6, glutamate 7, and aspartate 103.

Belongs to the RNase HII family. Mn(2+) is required as a cofactor. The cofactor is Mg(2+).

The protein localises to the cytoplasm. It catalyses the reaction Endonucleolytic cleavage to 5'-phosphomonoester.. Its function is as follows. Endonuclease that specifically degrades the RNA of RNA-DNA hybrids. The polypeptide is Ribonuclease HII (Saccharolobus solfataricus (strain ATCC 35092 / DSM 1617 / JCM 11322 / P2) (Sulfolobus solfataricus)).